Here is a 274-residue protein sequence, read N- to C-terminus: 2,3,4,5-tetrahydropyridine-2,6-dicarboxylate N-succinyltransferase (274 aa).

Positions 106 and 143 each coordinate substrate.

It belongs to the transferase hexapeptide repeat family. In terms of assembly, homotrimer.

It localises to the cytoplasm. The enzyme catalyses (S)-2,3,4,5-tetrahydrodipicolinate + succinyl-CoA + H2O = (S)-2-succinylamino-6-oxoheptanedioate + CoA. It participates in amino-acid biosynthesis; L-lysine biosynthesis via DAP pathway; LL-2,6-diaminopimelate from (S)-tetrahydrodipicolinate (succinylase route): step 1/3. The chain is 2,3,4,5-tetrahydropyridine-2,6-dicarboxylate N-succinyltransferase from Cupriavidus metallidurans (strain ATCC 43123 / DSM 2839 / NBRC 102507 / CH34) (Ralstonia metallidurans).